We begin with the raw amino-acid sequence, 411 residues long: Meiotically up-regulated gene 147 protein (411 aa).

3 disordered regions span residues 1–52 (MLAQ…FENK), 102–137 (EREE…ELAD), and 156–191 (HQHE…HYES). Residues 33–43 (TQNESNLQQSE) are compositionally biased toward polar residues. Over residues 156–172 (HQHEDEFSSSNKDKGFT) the composition is skewed to basic and acidic residues.

The protein resides in the cytoplasm. It localises to the nucleus. Has a role in meiosis. The polypeptide is Meiotically up-regulated gene 147 protein (mug147) (Schizosaccharomyces pombe (strain 972 / ATCC 24843) (Fission yeast)).